The following is a 308-amino-acid chain: Porphobilinogen deaminase (308 aa).

Cys-240 carries the post-translational modification S-(dipyrrolylmethanemethyl)cysteine.

It belongs to the HMBS family. In terms of assembly, monomer. The cofactor is dipyrromethane.

The catalysed reaction is 4 porphobilinogen + H2O = hydroxymethylbilane + 4 NH4(+). It participates in porphyrin-containing compound metabolism; protoporphyrin-IX biosynthesis; coproporphyrinogen-III from 5-aminolevulinate: step 2/4. Functionally, tetrapolymerization of the monopyrrole PBG into the hydroxymethylbilane pre-uroporphyrinogen in several discrete steps. The sequence is that of Porphobilinogen deaminase from Maridesulfovibrio salexigens (strain ATCC 14822 / DSM 2638 / NCIMB 8403 / VKM B-1763) (Desulfovibrio salexigens).